Reading from the N-terminus, the 1175-residue chain is Pyruvate carboxylase 1 (1175 aa).

The Biotin carboxylation domain occupies 31 to 481; sequence EFNKVMVANR…DTYFIDEHPE (451 aa). 3 residues coordinate ATP: Lys147, Glu231, and His266. The ATP-grasp domain occupies 151–348; that stretch reads RQAAIEAGVQ…LVQAQIRIAE (198 aa). Arg323 is an active-site residue. Positions 559–828 constitute a Pyruvate carboxyltransferase domain; it reads CMITDTTFRD…DTGLSLDDIS (270 aa). Residues 567–571 and Arg640 contribute to the substrate site; that span reads RDAHQ. Asp568 contributes to the a divalent metal cation binding site. A divalent metal cation is bound by residues Lys737, His767, and His769. An N6-carboxylysine modification is found at Lys737. Thr904 provides a ligand contact to substrate. Residues 1099–1174 form the Biotinyl-binding domain; that stretch reads RALPGVRGHI…SAGDLVVEVE (76 aa). Position 1140 is an N6-biotinyllysine (Lys1140).

Interacts with sir-2.2 and sir-2.3. Requires biotin as cofactor. Zn(2+) is required as a cofactor.

The protein resides in the cytoplasm. It carries out the reaction hydrogencarbonate + pyruvate + ATP = oxaloacetate + ADP + phosphate + H(+). Its pathway is carbohydrate biosynthesis; gluconeogenesis. Its function is as follows. Pyruvate carboxylase catalyzes a 2-step reaction, involving the ATP-dependent carboxylation of the covalently attached biotin in the first step and the transfer of the carboxyl group to pyruvate in the second. This Caenorhabditis elegans protein is Pyruvate carboxylase 1.